Reading from the N-terminus, the 638-residue chain is Ubiquitin-like-specific protease 2 (638 aa).

Positions 1–12 are enriched in basic and acidic residues; it reads MRDSKDALDDKS. 2 disordered regions span residues 1–79 and 238–314; these read MRDS…PKHL and PQKT…TSND. Residues 238 to 249 show a composition bias toward polar residues; it reads PQKTVRSIVKQT. Residues 250 to 264 are compositionally biased toward low complexity; sequence SSPHSSKMPKHSLPS. A compositionally biased stretch (polar residues) spans 267-314; the sequence is TPFNSNSGDSLLSRIKNSNQSSSERPTANNGAQEQNQSSSSAGNTSND. Active-site residues include His-440 and Asp-494. The residue at position 526 (Thr-526) is a Phosphothreonine. The active site involves Cys-544. The span at 610-619 shows a compositional bias: polar residues; it reads NERQSLSSGS. The disordered stretch occupies residues 610–638; the sequence is NERQSLSSGSNDEEDKENDDDLAILPITN. Positions 620–631 are enriched in acidic residues; the sequence is NDEEDKENDDDL.

This sequence belongs to the peptidase C48 family.

The protein localises to the nucleus. The protein is Ubiquitin-like-specific protease 2 (ulp2) of Schizosaccharomyces pombe (strain 972 / ATCC 24843) (Fission yeast).